Here is a 112-residue protein sequence, read N- to C-terminus: Protein FAM32A (112 aa).

The disordered stretch occupies residues 15-35; it reads KGCGDMSLGKKKKKKNKANDQ.

Belongs to the FAM32 family.

Its subcellular location is the nucleus. Its function is as follows. May induce G2 arrest and apoptosis. May also increase cell sensitivity to apoptotic stimuli. The sequence is that of Protein FAM32A (fam32a) from Xenopus tropicalis (Western clawed frog).